Reading from the N-terminus, the 39-residue chain is Photosystem II reaction center protein L (39 aa).

A helical membrane pass occupies residues 18–38 (SLYLGLLLVAVLGILFSSYFF).

The protein belongs to the PsbL family. PSII is composed of 1 copy each of membrane proteins PsbA, PsbB, PsbC, PsbD, PsbE, PsbF, PsbH, PsbI, PsbJ, PsbK, PsbL, PsbM, PsbT, PsbX, PsbY, PsbZ, Psb30/Ycf12, peripheral proteins PsbO, CyanoQ (PsbQ), PsbU, PsbV and a large number of cofactors. It forms dimeric complexes.

The protein localises to the cellular thylakoid membrane. Functionally, one of the components of the core complex of photosystem II (PSII). PSII is a light-driven water:plastoquinone oxidoreductase that uses light energy to abstract electrons from H(2)O, generating O(2) and a proton gradient subsequently used for ATP formation. It consists of a core antenna complex that captures photons, and an electron transfer chain that converts photonic excitation into a charge separation. This subunit is found at the monomer-monomer interface and is required for correct PSII assembly and/or dimerization. This is Photosystem II reaction center protein L from Microcystis aeruginosa (strain NIES-843 / IAM M-2473).